A 287-amino-acid chain; its full sequence is Protease HtpX (287 aa).

Helical transmembrane passes span 4–24 and 33–53; these read IFLL…VMSI and GGLL…SLAI. His-139 contacts Zn(2+). The active site involves Glu-140. His-143 serves as a coordination point for Zn(2+). 2 helical membrane-spanning segments follow: residues 154-174 and 195-215; these read LIQG…AGII and AVVF…VAYF. Position 220 (Glu-220) interacts with Zn(2+).

Belongs to the peptidase M48B family. It depends on Zn(2+) as a cofactor.

The protein localises to the cell inner membrane. The protein is Protease HtpX of Shewanella baltica (strain OS223).